The primary structure comprises 200 residues: Protein GrpE (200 aa).

Residues 15–47 (DLEMDLNEEELEESEVNEDKEFEELDKSEEENE) form a disordered region. The span at 16–47 (LEMDLNEEELEESEVNEDKEFEELDKSEEENE) shows a compositional bias: acidic residues.

This sequence belongs to the GrpE family. Homodimer.

It localises to the cytoplasm. Its function is as follows. Participates actively in the response to hyperosmotic and heat shock by preventing the aggregation of stress-denatured proteins, in association with DnaK and GrpE. It is the nucleotide exchange factor for DnaK and may function as a thermosensor. Unfolded proteins bind initially to DnaJ; upon interaction with the DnaJ-bound protein, DnaK hydrolyzes its bound ATP, resulting in the formation of a stable complex. GrpE releases ADP from DnaK; ATP binding to DnaK triggers the release of the substrate protein, thus completing the reaction cycle. Several rounds of ATP-dependent interactions between DnaJ, DnaK and GrpE are required for fully efficient folding. This Clostridium tetani (strain Massachusetts / E88) protein is Protein GrpE.